The primary structure comprises 43 residues: Protein PsbN (43 aa).

A helical membrane pass occupies residues T5 to F27.

It belongs to the PsbN family.

The protein resides in the plastid. It is found in the chloroplast thylakoid membrane. Its function is as follows. May play a role in photosystem I and II biogenesis. The protein is Protein PsbN of Lactoris fernandeziana.